The following is a 554-amino-acid chain: Undecaprenyl phosphate-alpha-4-amino-4-deoxy-L-arabinose arabinosyl transferase (554 aa).

The next 11 membrane-spanning stretches (helical) occupy residues 4–24, 87–107, 115–135, 178–198, 206–226, 262–282, 293–313, 315–335, 351–371, 384–404, and 414–434; these read LKDS…LLPV, FGSI…ATLL, VLAT…TYAV, FMTK…PIVI, LVVF…PWAL, YLPI…GALF, ELFF…VAKG, LPTY…AYAT, VINL…GLGL, QKVW…FITL, and AAAC…QQVV.

This sequence belongs to the glycosyltransferase 83 family.

Its subcellular location is the cell inner membrane. The catalysed reaction is 4-amino-4-deoxy-alpha-L-arabinopyranosyl di-trans,octa-cis-undecaprenyl phosphate + lipid IVA = lipid IIA + di-trans,octa-cis-undecaprenyl phosphate.. The protein operates within lipopolysaccharide metabolism; 4-amino-4-deoxy-beta-L-arabinose-lipid A biosynthesis. In terms of biological role, catalyzes the transfer of the L-Ara4N moiety of the glycolipid undecaprenyl phosphate-alpha-L-Ara4N to lipid A. The modified arabinose is attached to lipid A and is required for resistance to polymyxin and cationic antimicrobial peptides. The protein is Undecaprenyl phosphate-alpha-4-amino-4-deoxy-L-arabinose arabinosyl transferase of Yersinia pseudotuberculosis serotype O:3 (strain YPIII).